The primary structure comprises 129 residues: Follitropin subunit beta (129 aa).

The N-terminal stretch at 1–20 is a signal peptide; sequence MKTLQFFFLFCCWKAICCNS. 6 disulfides stabilise this stretch: Cys21-Cys69, Cys35-Cys84, Cys38-Cys122, Cys46-Cys100, Cys50-Cys102, and Cys105-Cys112. Asn25 and Asn42 each carry an N-linked (GlcNAc...) asparagine glycan.

This sequence belongs to the glycoprotein hormones subunit beta family. In terms of assembly, heterodimer. The active follitropin is a heterodimer composed of an alpha chain/CGA shared with other hormones and a unique beta chain/FSHB shown here.

The protein localises to the secreted. In terms of biological role, together with the alpha chain CGA constitutes follitropin, the follicle-stimulating hormone, and provides its biological specificity to the hormone heterodimer. Binds FSHR, a G protein-coupled receptor, on target cells to activate downstream signaling pathways. Follitropin is involved in follicle development and spermatogenesis in reproductive organs. The chain is Follitropin subunit beta (FSHB) from Gorilla gorilla gorilla (Western lowland gorilla).